A 284-amino-acid chain; its full sequence is MEMO1 family protein M1425_2054 (284 aa).

This sequence belongs to the MEMO1 family.

The polypeptide is MEMO1 family protein M1425_2054 (Saccharolobus islandicus (strain M.14.25 / Kamchatka #1) (Sulfolobus islandicus)).